A 527-amino-acid chain; its full sequence is Probable feruloyl esterase B-2 (527 aa).

Positions Met1–Ala19 are cleaved as a signal peptide. 2 cysteine pairs are disulfide-bonded: Cys28–Cys75 and Cys63–Cys114. Asn53, Asn85, Asn98, Asn138, and Asn180 each carry an N-linked (GlcNAc...) asparagine glycan. Disulfide bonds link Cys187-Cys441, Cys256-Cys273, Cys282-Cys291, and Cys503-Cys525. Ser188 acts as the Acyl-ester intermediate in catalysis. Ca(2+) contacts are provided by Asp257, Asp260, Ala262, Asp264, and Ile266. 2 N-linked (GlcNAc...) asparagine glycosylation sites follow: Asn311 and Asn355. Catalysis depends on charge relay system residues Asp400 and His440. Asn516 carries an N-linked (GlcNAc...) asparagine glycan.

Belongs to the tannase family.

Its subcellular location is the secreted. The catalysed reaction is feruloyl-polysaccharide + H2O = ferulate + polysaccharide.. Involved in degradation of plant cell walls. Hydrolyzes the feruloyl-arabinose ester bond in arabinoxylans as well as the feruloyl-galactose and feruloyl-arabinose ester bonds in pectin. The chain is Probable feruloyl esterase B-2 (faeB-2) from Aspergillus terreus (strain NIH 2624 / FGSC A1156).